Here is a 145-residue protein sequence, read N- to C-terminus: S-adenosylmethionine synthase 2 (145 aa).

Residues 6–7, Ala-23, Lys-27, and Lys-31 contribute to the ATP site; that span reads RK. Lys-31 is a binding site for L-methionine.

It belongs to the AdoMet synthase family. In terms of assembly, homotetramer. Mn(2+) serves as cofactor. Requires Mg(2+) as cofactor. Co(2+) is required as a cofactor. The cofactor is K(+). Mainly in floral buds and roots.

The protein resides in the cytoplasm. It carries out the reaction L-methionine + ATP + H2O = S-adenosyl-L-methionine + phosphate + diphosphate. The protein operates within amino-acid biosynthesis; S-adenosyl-L-methionine biosynthesis; S-adenosyl-L-methionine from L-methionine: step 1/1. Functionally, catalyzes the formation of S-adenosylmethionine from methionine and ATP. The reaction comprises two steps that are both catalyzed by the same enzyme: formation of S-adenosylmethionine (AdoMet) and triphosphate, and subsequent hydrolysis of the triphosphate. This is S-adenosylmethionine synthase 2 (SMS-2) from Petroselinum crispum (Parsley).